The sequence spans 391 residues: 3-ketoacyl-CoA thiolase (391 aa).

Cysteine 90 serves as the catalytic Acyl-thioester intermediate. Active-site proton acceptor residues include histidine 347 and cysteine 377.

It belongs to the thiolase-like superfamily. Thiolase family.

The catalysed reaction is an acyl-CoA + acetyl-CoA = a 3-oxoacyl-CoA + CoA. The protein operates within lipid metabolism; fatty acid beta-oxidation. In terms of biological role, involved in the degradation of long-chain fatty acids. This Bacillus subtilis (strain 168) protein is 3-ketoacyl-CoA thiolase (fadA).